Here is a 345-residue protein sequence, read N- to C-terminus: N-acetyl-gamma-glutamyl-phosphate reductase (345 aa).

The active site involves cysteine 149.

It belongs to the NAGSA dehydrogenase family. Type 1 subfamily.

Its subcellular location is the cytoplasm. The catalysed reaction is N-acetyl-L-glutamate 5-semialdehyde + phosphate + NADP(+) = N-acetyl-L-glutamyl 5-phosphate + NADPH + H(+). It participates in amino-acid biosynthesis; L-arginine biosynthesis; N(2)-acetyl-L-ornithine from L-glutamate: step 3/4. In terms of biological role, catalyzes the NADPH-dependent reduction of N-acetyl-5-glutamyl phosphate to yield N-acetyl-L-glutamate 5-semialdehyde. This is N-acetyl-gamma-glutamyl-phosphate reductase from Bacillus thuringiensis subsp. konkukian (strain 97-27).